The following is a 587-amino-acid chain: Sedolisin (587 aa).

The N-terminal stretch at 1 to 32 (MKSSAAKQTVLCLNRYAVVALPLAIASFAAFG) is a signal peptide. A propeptide spans 33 to 215 (ASPASTLWAP…VGERSAAKTL (183 aa)) (removed in mature form). In terms of domain architecture, Peptidase S53 spans 219–583 (TAKGHNPTEF…AKLSAYIRSN (365 aa)). The tract at residues 276 to 295 (TIQTGSSNGDYSDDQQGQGE) is disordered. Catalysis depends on charge relay system residues Glu295 and Asp299. Cys352 and Cys391 are oxidised to a cystine. Ser502 functions as the Charge relay system in the catalytic mechanism. Positions 543, 544, 559, 561, and 563 each coordinate Ca(2+). The propeptide at 586–587 (GH) is removed in mature form.

Ca(2+) is required as a cofactor. Post-translationally, autocatalytically processed.

The protein resides in the periplasm. The catalysed reaction is Hydrolysis of the B chain of insulin at 13-Glu-|-Ala-14, 15-Leu-|-Tyr-16 and 25-Phe-|-Tyr-26 and angiotensin I at 4-Tyr-|-Ile-5. A good synthetic substrate is Lys-Pro-Ile-Glu-Phe-|-Phe(NO2)-Arg-Leu.. Its activity is regulated as follows. Inhibited by 1,2-epoxy-3-(p-nitrophenoxy)propane (EPNP), but not by carboxyl proteinase inhibitors, such as pepstatin, pepstatin Ac (S-PI) and diazoacetyl-DL-norleucine methyl ester (DAN). Inhibited by tyrostatin, pseudo-tyrostatin, AcIPF, AcIAF, chymostatin and pseudo-iodotyrostatin. Its function is as follows. Pepstatin-insensitive serine-carboxyl proteinase. In vitro can hydrolyze various synthetic peptides. Also shows activity on acid-denatured hemoglobin and on casein. In Pseudomonas sp. (strain 101) (Achromobacter parvulus T1), this protein is Sedolisin (pcp).